The following is a 122-amino-acid chain: Histone H2B subacrosomal variant (122 aa).

Over residues 1 to 25 (MARNVTKRNKRCRGHQKAIYKKKSH) the composition is skewed to basic residues. Residues 1–30 (MARNVTKRNKRCRGHQKAIYKKKSHSSSES) form a disordered region.

Belongs to the histone H2B family. Testis-specific. Restricted to the spermatid population of seminiferous epithelium. Not present in Sertoli cells, spermatogonia, spermatocytes or cells of the interstitial tissue (at protein level).

The protein localises to the cytoplasm. May act as an acrosome-nuclear docking protein in sperm. The sequence is that of Histone H2B subacrosomal variant (SUBH2BV) from Bos taurus (Bovine).